The sequence spans 150 residues: Nucleoside diphosphate kinase (150 aa).

Residues Lys-9, Phe-57, Arg-85, Thr-91, Arg-102, and Asn-112 each contribute to the ATP site. His-115 (pros-phosphohistidine intermediate) is an active-site residue.

Belongs to the NDK family. As to quaternary structure, homotetramer. Requires Mg(2+) as cofactor.

It localises to the cytoplasm. The catalysed reaction is a 2'-deoxyribonucleoside 5'-diphosphate + ATP = a 2'-deoxyribonucleoside 5'-triphosphate + ADP. It carries out the reaction a ribonucleoside 5'-diphosphate + ATP = a ribonucleoside 5'-triphosphate + ADP. Major role in the synthesis of nucleoside triphosphates other than ATP. The ATP gamma phosphate is transferred to the NDP beta phosphate via a ping-pong mechanism, using a phosphorylated active-site intermediate. This is Nucleoside diphosphate kinase from Staphylococcus carnosus (strain TM300).